The following is a 219-amino-acid chain: Leukocyte surface antigen CD53 (219 aa).

The Cytoplasmic portion of the chain corresponds to 1–11 (MGMSSLKLLKY). The helical transmembrane segment at 12–32 (VLFIFNLLFWVCGCCILGFGI) threads the bilayer. Residues 33–54 (YFLVQNTYGVLFRNLPFLTLGN) lie on the Extracellular side of the membrane. The helical transmembrane segment at 55 to 69 (ILVIVGSIIMVVAFL) threads the bilayer. The Cytoplasmic portion of the chain corresponds to 70 to 80 (GCMGSIKENKC). The chain crosses the membrane as a helical span at residues 81 to 106 (LLMSFFVLLLIILLAEVTIAILLFVY). Over 107 to 181 (EQKLNTLVAE…NKAKSWFHSN (75 aa)) the chain is Extracellular. Residues asparagine 119, asparagine 129, and asparagine 148 are each glycosylated (N-linked (GlcNAc...) asparagine). The chain crosses the membrane as a helical span at residues 182–206 (FLYIGIITICVCVIQVLGMSFALTL). Residues 207 to 219 (NCQIDKTSQALGL) lie on the Cytoplasmic side of the membrane.

Belongs to the tetraspanin (TM4SF) family. In terms of assembly, interacts with SCIMP. Interacts with CD45/PTPRC. Interacts with IL7R. Interacts with RBL2 and PPP2CA.

Its subcellular location is the cell membrane. The protein resides in the cell junction. The protein localises to the membrane. Its function is as follows. Structural component of specialized membrane microdomains known as tetraspanin-enriched microdomains (TERMs), which act as platforms for receptor clustering and signaling. Participates thereby in diverse biological functions such as cell signal transduction, adhesion, migration and protein trafficking. Plays a role in the activation of monocytes and B-cells. Acts as an essential regulator of B-cell development by promoting interleukin-7 receptor/IL7R signaling. Also promotes, in B-cells, the BCR signaling by recruiting PKC to the plasma membrane in order to phosphorylate its substrates. Plays an essential role in lymphocyte homing to lymph nodes by stabilizing L-selectin/SELL cell surface expression. Also mediates metabolic and inflammatory functions in hepatocytes and adipose tissue by promoting TNF-alpha and LPS signaling independent of the immune compartment. Protects hematopoietic stem cell function in response to stress by facilitating DREAM complex activity through association with p130/RBL2 and its phosphatase PP2A. This Mus musculus (Mouse) protein is Leukocyte surface antigen CD53 (Cd53).